A 421-amino-acid chain; its full sequence is Testin (421 aa).

In terms of domain architecture, PET spans 92 to 199 (MILTNPVPAK…GDVKLPSEMD (108 aa)). The segment at 135–165 (QPVAGSEGAQYRKKQLAKQLPEHDQDPSKCH) is disordered. Residues 154–165 (LPEHDQDPSKCH) are compositionally biased toward basic and acidic residues. 3 LIM zinc-binding domains span residues 234 to 297 (YSCY…CDSE), 299 to 359 (PRCA…NHAV), and 362 to 421 (QGCH…KMMS).

The protein belongs to the prickle / espinas / testin family. Interacts via LIM domain 1 with ZYX. Interacts (via LIM domain 3) with ENAH and VASP. Interacts with ALKBH4, talin, actin, alpha-actinin, GRIP1 and PXN. Interacts (via LIM domain 2) with ACTL7A (via N-terminus). Heterodimer with ACTL7A; the heterodimer interacts with ENAH to form a heterotrimer.

It localises to the cytoplasm. The protein localises to the cell junction. Its subcellular location is the focal adhesion. Scaffold protein that may play a role in cell adhesion, cell spreading and in the reorganization of the actin cytoskeleton. Plays a role in the regulation of cell proliferation. May act as a tumor suppressor. In Dasypus novemcinctus (Nine-banded armadillo), this protein is Testin (TES).